The chain runs to 530 residues: Autoinducer-2 kinase (530 aa).

The protein belongs to the FGGY kinase family.

It is found in the cytoplasm. The catalysed reaction is (S)-4,5-dihydroxypentane-2,3-dione + ATP = (2S)-2-hydroxy-3,4-dioxopentyl phosphate + ADP + H(+). Functionally, catalyzes the phosphorylation of autoinducer-2 (AI-2) to phospho-AI-2, which subsequently inactivates the transcriptional regulator LsrR and leads to the transcription of the lsr operon. Phosphorylates the ring-open form of (S)-4,5-dihydroxypentane-2,3-dione (DPD), which is the precursor to all AI-2 signaling molecules, at the C5 position. The sequence is that of Autoinducer-2 kinase from Escherichia coli (strain ATCC 8739 / DSM 1576 / NBRC 3972 / NCIMB 8545 / WDCM 00012 / Crooks).